A 304-amino-acid polypeptide reads, in one-letter code: Ribonuclease Z (304 aa).

7 residues coordinate Zn(2+): H61, H63, D65, H66, H138, D206, and H265. D65 (proton acceptor) is an active-site residue.

Belongs to the RNase Z family. As to quaternary structure, homodimer. Requires Zn(2+) as cofactor.

It carries out the reaction Endonucleolytic cleavage of RNA, removing extra 3' nucleotides from tRNA precursor, generating 3' termini of tRNAs. A 3'-hydroxy group is left at the tRNA terminus and a 5'-phosphoryl group is left at the trailer molecule.. Zinc phosphodiesterase, which displays some tRNA 3'-processing endonuclease activity. Probably involved in tRNA maturation, by removing a 3'-trailer from precursor tRNA. This is Ribonuclease Z from Lachnospira eligens (strain ATCC 27750 / DSM 3376 / VPI C15-48 / C15-B4) (Eubacterium eligens).